A 1182-amino-acid polypeptide reads, in one-letter code: DNA-directed RNA polymerase subunit beta (1182 aa).

The segment covering 1150 to 1162 has biased composition (acidic residues); the sequence is DEEVEMKDEDDDN. The interval 1150–1182 is disordered; it reads DEEVEMKDEDDDNIPNATSALEQVVQPTVTEEE. A compositionally biased stretch (low complexity) spans 1171 to 1182; the sequence is EQVVQPTVTEEE.

Belongs to the RNA polymerase beta chain family. In terms of assembly, the RNAP catalytic core consists of 2 alpha, 1 beta, 1 beta' and 1 omega subunit. When a sigma factor is associated with the core the holoenzyme is formed, which can initiate transcription.

It catalyses the reaction RNA(n) + a ribonucleoside 5'-triphosphate = RNA(n+1) + diphosphate. Its function is as follows. DNA-dependent RNA polymerase catalyzes the transcription of DNA into RNA using the four ribonucleoside triphosphates as substrates. The protein is DNA-directed RNA polymerase subunit beta of Exiguobacterium sp. (strain ATCC BAA-1283 / AT1b).